The primary structure comprises 311 residues: Serine/threonine-protein phosphatase 4 catalytic subunit A (311 aa).

Residues aspartate 58, histidine 60, aspartate 86, and asparagine 118 each contribute to the Mn(2+) site. Histidine 119 acts as the Proton donor in catalysis. 2 residues coordinate Mn(2+): histidine 168 and histidine 242. Leucine 311 carries the post-translational modification Leucine methyl ester.

This sequence belongs to the PPP phosphatase family. PP-4 (PP-X) subfamily. In terms of assembly, serine/threonine-protein phosphatase 4 (PP4) occurs in different assemblies of the catalytic and one or more regulatory subunits. It depends on Mn(2+) as a cofactor.

It localises to the cytoplasm. Its subcellular location is the cytoskeleton. It is found in the microtubule organizing center. The protein resides in the centrosome. It carries out the reaction O-phospho-L-seryl-[protein] + H2O = L-seryl-[protein] + phosphate. The enzyme catalyses O-phospho-L-threonyl-[protein] + H2O = L-threonyl-[protein] + phosphate. In terms of biological role, protein phosphatase that regulates many processes such as microtubule organization at centrosomes. The chain is Serine/threonine-protein phosphatase 4 catalytic subunit A (ppp4ca) from Danio rerio (Zebrafish).